The following is a 677-amino-acid chain: Protein asunder (677 aa).

Residues 515 to 540 (RLKLSKAKDQYRLLYRELEQLIQLNS) adopt a coiled-coil conformation. Low complexity predominate over residues 578–598 (ESPLSPERLEPTSSSSSNSLL). The tract at residues 578–604 (ESPLSPERLEPTSSSSSNSLLKARKRR) is disordered. The Nuclear localization signal (NLS) motif lies at 598-604 (LKARKRR).

This sequence belongs to the Integrator subunit 13 family. As to quaternary structure, belongs to the multiprotein complex Integrator, at least composed of IntS1, IntS2, IntS3, IntS4, omd/IntS5, IntS6, defl/IntS7, IntS8, IntS9, IntS10, IntS11, IntS12, asun/IntS13, IntS14 and IntS15. The core complex associates with protein phosphatase 2A subunits mts/PP2A and Pp2A-29B, to form the Integrator-PP2A (INTAC) complex. In terms of processing, phosphorylated.

It localises to the nucleus. It is found in the cytoplasm. The protein resides in the perinuclear region. Functionally, component of the integrator complex, a multiprotein complex that terminates RNA polymerase II (Pol II) transcription in the promoter-proximal region of genes. The integrator complex provides a quality checkpoint during transcription elongation by driving premature transcription termination of transcripts that are unfavorably configured for transcriptional elongation: the complex terminates transcription by (1) catalyzing dephosphorylation of the C-terminal domain (CTD) of Pol II subunit Polr2A/Rbp1 and Spt5, and (2) degrading the exiting nascent RNA transcript via endonuclease activity. The integrator complex is also involved in the 3'-end processing of the U7 snRNA, and also the spliceosomal snRNAs U1, U2, U4 and U5. This is Protein asunder (asun) from Drosophila willistoni (Fruit fly).